The sequence spans 901 residues: Viral-enhancing factor (901 aa).

In terms of domain architecture, Peptidase M60 spans 27–330 (HRRTEVGVVL…IFTWLYNPQR (304 aa)). Residues asparagine 265, asparagine 278, asparagine 339, asparagine 349, asparagine 540, asparagine 594, asparagine 595, asparagine 642, asparagine 683, and asparagine 698 are each glycosylated (N-linked (GlcNAc...) asparagine; by host).

Involved in disruption of the peritrophic membrane and fusion of nucleocapsids with midgut cells. This is Viral-enhancing factor (VEF) from Pseudalatia unipuncta granulosis virus (PuGV).